We begin with the raw amino-acid sequence, 385 residues long: S-adenosylmethionine synthase (385 aa).

ATP is bound at residue His-15. Residue Asp-17 coordinates Mg(2+). Glu-43 contacts K(+). L-methionine is bound by residues Glu-56 and Gln-99. The interval 99–109 (QSPDINQGVDR) is flexible loop. ATP contacts are provided by residues 164–166 (DAK), 230–231 (RF), Asp-239, 245–246 (RK), Ala-262, and Lys-266. L-methionine is bound at residue Asp-239. Lys-270 lines the L-methionine pocket.

This sequence belongs to the AdoMet synthase family. As to quaternary structure, homotetramer; dimer of dimers. Mg(2+) is required as a cofactor. K(+) serves as cofactor.

The protein localises to the cytoplasm. The enzyme catalyses L-methionine + ATP + H2O = S-adenosyl-L-methionine + phosphate + diphosphate. Its pathway is amino-acid biosynthesis; S-adenosyl-L-methionine biosynthesis; S-adenosyl-L-methionine from L-methionine: step 1/1. In terms of biological role, catalyzes the formation of S-adenosylmethionine (AdoMet) from methionine and ATP. The overall synthetic reaction is composed of two sequential steps, AdoMet formation and the subsequent tripolyphosphate hydrolysis which occurs prior to release of AdoMet from the enzyme. The chain is S-adenosylmethionine synthase from Sodalis glossinidius (strain morsitans).